Reading from the N-terminus, the 295-residue chain is Hepatic leukemia factor (295 aa).

A compositionally biased stretch (basic and acidic residues) spans 37-52 (EDAFSKDKDKEKKLDD). Disordered regions lie at residues 37 to 70 (EDAF…PTLW) and 93 to 167 (SENG…IDPD). In terms of domain architecture, bZIP spans 225–288 (DDKYWARRRK…GKCKNILAKY (64 aa)). The interval 227-247 (KYWARRRKNNMAAKRSRDARR) is basic motif. The interval 248–255 (LKENQIAI) is leucine-zipper.

It belongs to the bZIP family. PAR subfamily. In terms of assembly, binds DNA specifically as homodimer or heterodimer with other PAR factors. Highly expressed in liver; lower levels in lung and kidney.

Its subcellular location is the nucleus. The protein is Hepatic leukemia factor (HLF) of Homo sapiens (Human).